A 152-amino-acid polypeptide reads, in one-letter code: uncharacterized protein (152 aa).

Residues 127–152 (EKEKAERKAEKAKKNKKKSSTKTKKK) form a disordered region. The span at 136–152 (EKAKKNKKKSSTKTKKK) shows a compositional bias: basic residues.

Belongs to the mimivirus R546 family.

This is an uncharacterized protein from Sputnik virophage.